The primary structure comprises 665 residues: DNA ligase (665 aa).

NAD(+)-binding positions include 32 to 36 (DSEYD), 81 to 82 (SL), and Glu110. The active-site N6-AMP-lysine intermediate is Lys112. The NAD(+) site is built by Arg133, Glu167, Lys283, and Lys307. Residues Cys401, Cys404, Cys419, and Cys424 each coordinate Zn(2+). A BRCT domain is found at 586–665 (EGHPDFSGKT…AAFIEKQNGI (80 aa)).

It belongs to the NAD-dependent DNA ligase family. LigA subfamily. Mg(2+) is required as a cofactor. The cofactor is Mn(2+).

The catalysed reaction is NAD(+) + (deoxyribonucleotide)n-3'-hydroxyl + 5'-phospho-(deoxyribonucleotide)m = (deoxyribonucleotide)n+m + AMP + beta-nicotinamide D-nucleotide.. Functionally, DNA ligase that catalyzes the formation of phosphodiester linkages between 5'-phosphoryl and 3'-hydroxyl groups in double-stranded DNA using NAD as a coenzyme and as the energy source for the reaction. It is essential for DNA replication and repair of damaged DNA. The chain is DNA ligase from Staphylococcus epidermidis (strain ATCC 35984 / DSM 28319 / BCRC 17069 / CCUG 31568 / BM 3577 / RP62A).